The primary structure comprises 151 residues: Arginine repressor (151 aa).

It belongs to the ArgR family.

The protein localises to the cytoplasm. The protein operates within amino-acid biosynthesis; L-arginine biosynthesis [regulation]. Functionally, regulates arginine biosynthesis genes. The sequence is that of Arginine repressor from Enterococcus faecalis (strain ATCC 700802 / V583).